The following is a 150-amino-acid chain: UPF0178 protein PP_5221 (150 aa).

Belongs to the UPF0178 family.

The chain is UPF0178 protein PP_5221 from Pseudomonas putida (strain ATCC 47054 / DSM 6125 / CFBP 8728 / NCIMB 11950 / KT2440).